The sequence spans 485 residues: D-alanine--D-alanyl carrier protein ligase (485 aa).

Residue 144 to 145 participates in ATP binding; the sequence is TS. Aspartate 189 serves as a coordination point for D-alanine. 284-289 contributes to the ATP binding site; sequence NTYGPT. A D-alanine-binding site is contributed by valine 293. Positions 365 and 473 each coordinate ATP. Lysine 473 is a binding site for D-alanine.

It belongs to the ATP-dependent AMP-binding enzyme family. DltA subfamily.

It localises to the cytoplasm. It catalyses the reaction holo-[D-alanyl-carrier protein] + D-alanine + ATP = D-alanyl-[D-alanyl-carrier protein] + AMP + diphosphate. The protein operates within cell wall biogenesis; lipoteichoic acid biosynthesis. In terms of biological role, catalyzes the first step in the D-alanylation of lipoteichoic acid (LTA), the activation of D-alanine and its transfer onto the D-alanyl carrier protein (Dcp) DltC. In an ATP-dependent two-step reaction, forms a high energy D-alanyl-AMP intermediate, followed by transfer of the D-alanyl residue as a thiol ester to the phosphopantheinyl prosthetic group of the Dcp. D-alanylation of LTA plays an important role in modulating the properties of the cell wall in Gram-positive bacteria, influencing the net charge of the cell wall. The chain is D-alanine--D-alanyl carrier protein ligase from Staphylococcus aureus (strain USA300).